A 449-amino-acid chain; its full sequence is MSTSHGYRASWWTNILHQVPHTNFQFEVVDNQFAPQEWPYQQALLFLASIAGLCLAISLILICVYLIRFCCCASQEDDDSKNHRVCCVTWSCVAAVIICCAGIGIGFYGNSETNDGVYQVTYSLMNTNHTLTSINLLVSDTVELLSSVVKSDLTQLEEIFSKRTEFLVMIRNTRRQVESVAQQLAEISFWKGTELNPNVLAEQVNFIEDYRWLAYILLLLLDLIICLFTLLGLAKRIKWLVIVMTVVSFFVLLLSWGSMGLEMATAVGLSDFCSNPDGYVMNQTQMITNINPDILQYYISCNQDVANPFRQRLTTSQRALSNIHSQLHGLEREAVPQFPTAEKNLLAVQGMLNTTEGNFHHLVALLNCRGLHKDYVDALKGLCYDGMEGILFLLLFSFLSALSFTAAVCSLPRAWKRFQNRDLDYDDMDEDDPFNPQESKRFVQWQSSI.

Topologically, residues 1–43 (MSTSHGYRASWWTNILHQVPHTNFQFEVVDNQFAPQEWPYQQA) are extracellular. A helical transmembrane segment spans residues 44–64 (LLFLASIAGLCLAISLILICV). Topologically, residues 65 to 86 (YLIRFCCCASQEDDDSKNHRVC) are cytoplasmic. Residues 87 to 107 (CVTWSCVAAVIICCAGIGIGF) traverse the membrane as a helical segment. The Extracellular segment spans residues 108 to 212 (YGNSETNDGV…QVNFIEDYRW (105 aa)). An N-linked (GlcNAc...) asparagine glycan is attached at Asn128. Residues 213–233 (LAYILLLLLDLIICLFTLLGL) traverse the membrane as a helical segment. Residues 234–238 (AKRIK) lie on the Cytoplasmic side of the membrane. A helical transmembrane segment spans residues 239–259 (WLVIVMTVVSFFVLLLSWGSM). The Extracellular segment spans residues 260–388 (GLEMATAVGL…LKGLCYDGME (129 aa)). 2 cysteine pairs are disulfide-bonded: Cys273-Cys383 and Cys301-Cys368. N-linked (GlcNAc...) asparagine glycans are attached at residues Asn282 and Asn353. Residues 389–409 (GILFLLLFSFLSALSFTAAVC) form a helical membrane-spanning segment. The Cytoplasmic segment spans residues 410 to 449 (SLPRAWKRFQNRDLDYDDMDEDDPFNPQESKRFVQWQSSI).

The protein belongs to the tweety family. In terms of assembly, homotetramer; disulfide-linked. Homodimer.

The protein localises to the cell membrane. It catalyses the reaction chloride(in) = chloride(out). It carries out the reaction L-glutamate(out) = L-glutamate(in). Functionally, may act as a calcium-independent, swelling-dependent volume-regulated anion channel (VRAC-swell) which plays a pivotal role in the process of regulatory volume decrease (RVD) in the brain through the efflux of anions like chloride and organic osmolytes like glutamate. The sequence is that of Protein tweety homolog 1-A (ttyh1-a) from Xenopus laevis (African clawed frog).